The primary structure comprises 471 residues: Variant surface glycoprotein WRATAT A (471 aa).

A signal peptide spans 1 to 18 (MSVLFLLLAITRTASVKA). Residues Asn-61 and Asn-133 are each glycosylated (N-linked (GlcNAc...) asparagine). The interval 373–457 (QEQTLATTGT…ANTTGSSNSF (85 aa)) is disordered. The segment covering 379-392 (TTGTKSSSPQSTQQ) has biased composition (low complexity). 2 cysteine pairs are disulfide-bonded: Cys-401–Cys-414 and Cys-410–Cys-427. Residues 401-447 (CNDKAKETECNSPCKWDKEEKDEKKRCKLSEEGKQAEKENQEGKDGK) are compositionally biased toward basic and acidic residues. Polar residues predominate over residues 448–457 (ANTTGSSNSF). Residue Asn-449 is glycosylated (N-linked (GlcNAc...) asparagine). A lipid anchor (GPI-anchor amidated serine) is attached at Ser-454. The propeptide at 455 to 471 (NSFVIKTSPLLLAVLLL) is removed in mature form.

The protein resides in the cell membrane. VSG forms a coat on the surface of the parasite. The trypanosome evades the immune response of the host by expressing a series of antigenically distinct VSGs from an estimated 1000 VSG genes. This chain is Variant surface glycoprotein WRATAT A, found in Trypanosoma brucei rhodesiense.